The sequence spans 448 residues: Tubulin beta chain (448 aa).

Gln11, Glu69, Ser138, Gly142, Thr143, Gly144, Asn204, and Asn226 together coordinate GTP. A Mg(2+)-binding site is contributed by Glu69. The disordered stretch occupies residues 425–448 (YQDAGVDEEEEEYDEEAPVEEPLE). A compositionally biased stretch (acidic residues) spans 429-448 (GVDEEEEEYDEEAPVEEPLE).

Belongs to the tubulin family. In terms of assembly, dimer of alpha and beta chains. A typical microtubule is a hollow water-filled tube with an outer diameter of 25 nm and an inner diameter of 15 nM. Alpha-beta heterodimers associate head-to-tail to form protofilaments running lengthwise along the microtubule wall with the beta-tubulin subunit facing the microtubule plus end conferring a structural polarity. Microtubules usually have 13 protofilaments but different protofilament numbers can be found in some organisms and specialized cells. Requires Mg(2+) as cofactor.

Its subcellular location is the cytoplasm. It is found in the cytoskeleton. Tubulin is the major constituent of microtubules, a cylinder consisting of laterally associated linear protofilaments composed of alpha- and beta-tubulin heterodimers. Microtubules grow by the addition of GTP-tubulin dimers to the microtubule end, where a stabilizing cap forms. Below the cap, tubulin dimers are in GDP-bound state, owing to GTPase activity of alpha-tubulin. The protein is Tubulin beta chain of Metarhizium anisopliae (Entomophthora anisopliae).